The following is a 244-amino-acid chain: Probable transcriptional regulatory protein BT0025 (244 aa).

Belongs to the TACO1 family.

Its subcellular location is the cytoplasm. This chain is Probable transcriptional regulatory protein BT0025, found in Borrelia turicatae (strain 91E135).